The following is a 28-amino-acid chain: trp operon leader peptide (28 aa).

Functionally, this protein is involved in control of the biosynthesis of tryptophan. The polypeptide is trp operon leader peptide (trpL) (Serratia marcescens).